The primary structure comprises 150 residues: Large ribosomal subunit protein bL9 (150 aa).

Belongs to the bacterial ribosomal protein bL9 family.

Binds to the 23S rRNA. This chain is Large ribosomal subunit protein bL9, found in Cupriavidus taiwanensis (strain DSM 17343 / BCRC 17206 / CCUG 44338 / CIP 107171 / LMG 19424 / R1) (Ralstonia taiwanensis (strain LMG 19424)).